The following is an 83-amino-acid chain: MKQGIHPDYREVVFQDSSTGFQFLSGSTATSDETVEWEDGNTYPLIRVEITSDSHPFYTGKQKFTQADGAVDRFNKKYGLSND.

This sequence belongs to the bacterial ribosomal protein bL31 family. Type B subfamily. Part of the 50S ribosomal subunit.

This Levilactobacillus brevis (strain ATCC 367 / BCRC 12310 / CIP 105137 / JCM 1170 / LMG 11437 / NCIMB 947 / NCTC 947) (Lactobacillus brevis) protein is Large ribosomal subunit protein bL31B.